The following is a 291-amino-acid chain: Probable endonuclease 4 (291 aa).

Residues His-72, His-112, Glu-147, Asp-181, His-184, His-215, Asp-228, His-230, and Glu-260 each coordinate Zn(2+).

It belongs to the AP endonuclease 2 family. The cofactor is Zn(2+).

The catalysed reaction is Endonucleolytic cleavage to 5'-phosphooligonucleotide end-products.. Its function is as follows. Endonuclease IV plays a role in DNA repair. It cleaves phosphodiester bonds at apurinic or apyrimidinic (AP) sites, generating a 3'-hydroxyl group and a 5'-terminal sugar phosphate. This is Probable endonuclease 4 from Mycoplasma genitalium (strain ATCC 33530 / DSM 19775 / NCTC 10195 / G37) (Mycoplasmoides genitalium).